Here is a 154-residue protein sequence, read N- to C-terminus: Myoglobin (154 aa).

The Globin domain maps to 2–148 (GLSDGEWQLV…FRNDIAAKYK (147 aa)). Serine 4 is subject to Phosphoserine. Histidine 65 serves as a coordination point for nitrite. Histidine 65 serves as a coordination point for O2. Threonine 68 is subject to Phosphothreonine. Histidine 94 is a binding site for heme b.

Belongs to the globin family. As to quaternary structure, monomeric.

The protein localises to the cytoplasm. It localises to the sarcoplasm. It carries out the reaction Fe(III)-heme b-[protein] + nitric oxide + H2O = Fe(II)-heme b-[protein] + nitrite + 2 H(+). The catalysed reaction is H2O2 + AH2 = A + 2 H2O. In terms of biological role, monomeric heme protein which primary function is to store oxygen and facilitate its diffusion within muscle tissues. Reversibly binds oxygen through a pentacoordinated heme iron and enables its timely and efficient release as needed during periods of heightened demand. Depending on the oxidative conditions of tissues and cells, and in addition to its ability to bind oxygen, it also has a nitrite reductase activity whereby it regulates the production of bioactive nitric oxide. Under stress conditions, like hypoxia and anoxia, it also protects cells against reactive oxygen species thanks to its pseudoperoxidase activity. This is Myoglobin (MB) from Proechimys guairae (Guaira spiny rat).